A 234-amino-acid chain; its full sequence is AA9 family lytic polysaccharide monooxygenase D (234 aa).

The signal sequence occupies residues 1-18 (MRIEKLLNAALLAGAVSA). Cu(2+)-binding residues include H19 and H95. Residues C57 and C182 are joined by a disulfide bond. O2 is bound by residues H168 and Q177. Position 179 (Y179) interacts with Cu(2+).

It belongs to the polysaccharide monooxygenase AA9 family. Cu(2+) serves as cofactor.

The protein resides in the secreted. The catalysed reaction is [(1-&gt;4)-beta-D-glucosyl]n+m + reduced acceptor + O2 = 4-dehydro-beta-D-glucosyl-[(1-&gt;4)-beta-D-glucosyl]n-1 + [(1-&gt;4)-beta-D-glucosyl]m + acceptor + H2O.. Lytic polysaccharide monooxygenase (LPMO) that depolymerizes crystalline and amorphous polysaccharides via the oxidation of scissile alpha- or beta-(1-4)-glycosidic bonds, yielding C1 or C4 oxidation products. Catalysis by LPMOs requires the reduction of the active-site copper from Cu(II) to Cu(I) by a reducing agent and H(2)O(2) or O(2) as a cosubstrate. The polypeptide is AA9 family lytic polysaccharide monooxygenase D (Malbranchea cinnamomea (Thermophilic fungus)).